We begin with the raw amino-acid sequence, 486 residues long: Probable peptidoglycan glycosyltransferase FtsW (486 aa).

Over 1–50 (MAGAARDRAFLDHFGGAGADRPCHVEGALMNDMSRQATRLDAIGGRYDPW) the chain is Cytoplasmic. Residues 51-71 (LLGAAVTLASLGVVMVASSSI) traverse the membrane as a helical segment. Topologically, residues 72-77 (ELEASP) are periplasmic. A helical transmembrane segment spans residues 78–98 (FYYLTRHLLFLGGGIALAFWA). Residues 99–112 (MRTELKTIEQHNQM) are Cytoplasmic-facing. The helical transmembrane segment at 113 to 133 (LLLACFVLLVVVFVPGLGSTV) threads the bilayer. The Periplasmic portion of the chain corresponds to 134 to 141 (NGAKRWIN). The helical transmembrane segment at 142–162 (LGVSRFQVVESVKVFYIIWLA) threads the bilayer. The Cytoplasmic portion of the chain corresponds to 163–174 (SYLVRFRDEVNA). Residues 175-195 (TWQAMLKPVFVVGLLVGLLLL) traverse the membrane as a helical segment. The Periplasmic portion of the chain corresponds to 196-199 (QPDF). A helical transmembrane segment spans residues 200–220 (GSSMLLLSVTACMLVLGGAPI). Topologically, residues 221 to 222 (GR) are cytoplasmic. A helical transmembrane segment spans residues 223–243 (IILPILLLLPALVALVIFEPY). The Periplasmic segment spans residues 244–298 (RMRRVTSFMDPWVDQLGSGYQLSNALMAIGRGQWTGVGLGASVQKLNYLPESHTD). A helical membrane pass occupies residues 299-319 (FIFSVIAEELGFVGVCGVIGL). Over 320-342 (YALLVGRAFWLGMRCVEMKRHFS) the chain is Cytoplasmic. A helical membrane pass occupies residues 343-363 (GYIAFGIGLWIAMQSFVSIGV). The Periplasmic segment spans residues 364–374 (NLGILPTKGLT). Residues 375 to 395 (LPLISSGGSSVLMTCLAMGVL) traverse the membrane as a helical segment. Residues 396 to 486 (LRVSYEADRA…RVEPTFGRIA (91 aa)) are Cytoplasmic-facing.

Belongs to the SEDS family. FtsW subfamily.

Its subcellular location is the cell inner membrane. It catalyses the reaction [GlcNAc-(1-&gt;4)-Mur2Ac(oyl-L-Ala-gamma-D-Glu-L-Lys-D-Ala-D-Ala)](n)-di-trans,octa-cis-undecaprenyl diphosphate + beta-D-GlcNAc-(1-&gt;4)-Mur2Ac(oyl-L-Ala-gamma-D-Glu-L-Lys-D-Ala-D-Ala)-di-trans,octa-cis-undecaprenyl diphosphate = [GlcNAc-(1-&gt;4)-Mur2Ac(oyl-L-Ala-gamma-D-Glu-L-Lys-D-Ala-D-Ala)](n+1)-di-trans,octa-cis-undecaprenyl diphosphate + di-trans,octa-cis-undecaprenyl diphosphate + H(+). The protein operates within cell wall biogenesis; peptidoglycan biosynthesis. Functionally, peptidoglycan polymerase that is essential for cell division. The protein is Probable peptidoglycan glycosyltransferase FtsW of Xanthomonas oryzae pv. oryzae (strain KACC10331 / KXO85).